We begin with the raw amino-acid sequence, 388 residues long: 1D-myo-inositol 2-acetamido-2-deoxy-alpha-D-glucopyranoside deacetylase (388 aa).

Zn(2+) contacts are provided by His6, Asp9, and His144. The tract at residues 369–388 (LDQADEGAAHDTSEQSGQRR) is disordered.

The protein belongs to the MshB deacetylase family. It depends on Zn(2+) as a cofactor.

The catalysed reaction is 1D-myo-inositol 2-acetamido-2-deoxy-alpha-D-glucopyranoside + H2O = 1D-myo-inositol 2-amino-2-deoxy-alpha-D-glucopyranoside + acetate. Its function is as follows. Catalyzes the deacetylation of 1D-myo-inositol 2-acetamido-2-deoxy-alpha-D-glucopyranoside (GlcNAc-Ins) in the mycothiol biosynthesis pathway. In Corynebacterium kroppenstedtii (strain DSM 44385 / JCM 11950 / CIP 105744 / CCUG 35717), this protein is 1D-myo-inositol 2-acetamido-2-deoxy-alpha-D-glucopyranoside deacetylase.